The following is a 154-amino-acid chain: MKLRDSLAENKSIRLQAEAETWQEAVKIGVDLLVAADVVEPRYYQAILDGVEQFGPYFVIAPGLAMPHGRPEEGVKKTGFSLVTLKKPLEFNHDDNDPVDILITMAAVDANTHQEVGIMQIVNLFEDEENFDRLRACRTEQEVLDLIDRTNAAA.

The 145-residue stretch at 6–150 (SLAENKSIRL…QEVLDLIDRT (145 aa)) folds into the PTS EIIA type-2 domain. Catalysis depends on H68, which acts as the Tele-phosphohistidine intermediate. Residue H68 is modified to Phosphohistidine.

It is found in the cytoplasm. The phosphoenolpyruvate-dependent sugar phosphotransferase system (sugar PTS), a major carbohydrate active transport system, catalyzes the phosphorylation of incoming sugar substrates concomitantly with their translocation across the cell membrane. The enzyme II UlaABC PTS system is involved in ascorbate transport. This Escherichia coli O157:H7 protein is Ascorbate-specific PTS system EIIA component (ulaC).